Consider the following 73-residue polypeptide: Large ribosomal subunit protein bL31 (73 aa).

Belongs to the bacterial ribosomal protein bL31 family. Type A subfamily. Part of the 50S ribosomal subunit.

In terms of biological role, binds the 23S rRNA. This chain is Large ribosomal subunit protein bL31, found in Cereibacter sphaeroides (strain ATCC 17029 / ATH 2.4.9) (Rhodobacter sphaeroides).